A 160-amino-acid chain; its full sequence is Major strawberry allergen Fra a 1.08 (160 aa).

The protein belongs to the BetVI family. Post-translationally, phosphorylated in vivo. Phosphorylation prevents its activity as ribonuclease. In terms of tissue distribution, highly expressed in roots. Expressed a low levels in ripe red fruits.

In terms of biological role, possesses ribonuclease activity in vitro. The protein is Major strawberry allergen Fra a 1.08 of Fragaria ananassa (Strawberry).